Here is an 838-residue protein sequence, read N- to C-terminus: Lymphoid-specific helicase (838 aa).

Residues 30-115 are a coiled coil; sequence MLEEEEQLEA…SLKVKKGKNS (86 aa). A compositionally biased stretch (basic and acidic residues) spans 94–108; that stretch reads QKKKEKLERKKESLK. Positions 94-135 are disordered; sequence QKKKEKLERKKESLKVKKGKNSIDASEEKPVMRKKRGREDES. The residue at position 115 (serine 115) is a Phosphoserine. A compositionally biased stretch (basic and acidic residues) spans 119 to 134; that stretch reads SEEKPVMRKKRGREDE. A Helicase ATP-binding domain is found at 235–403; it reads RMLWENGING…WSLLNFLLPD (169 aa). 248–255 is a binding site for ATP; that stretch reads DEMGLGKT. Positions 354–357 match the DEAH box motif; sequence DEGH. A phosphoserine mark is found at serine 503 and serine 515. Residues 603–767 enclose the Helicase C-terminal domain; it reads ILDRMLPELK…GLNLSKNFLD (165 aa).

This sequence belongs to the SNF2/RAD54 helicase family. As to expression, highly expressed in proliferative tissues such as adult thymus and testis, and expressed at lower levels in uterus, small intestine, colon, and peripheral blood mononuclear cells. Also expressed in neoplastic cell lines including those derived from myeloid and lymphoid leukemias.

The protein resides in the nucleus. Plays an essential role in normal development and survival. Involved in regulation of the expansion or survival of lymphoid cells. Required for de novo or maintenance DNA methylation. May control silencing of the imprinted CDKN1C gene through DNA methylation. May play a role in formation and organization of heterochromatin, implying a functional role in the regulation of transcription and mitosis. The polypeptide is Lymphoid-specific helicase (Homo sapiens (Human)).